A 1496-amino-acid polypeptide reads, in one-letter code: DNA-directed RNA polymerase subunit beta' (1496 aa).

Zn(2+)-binding residues include cysteine 67, cysteine 69, cysteine 82, and cysteine 85. Mg(2+)-binding residues include aspartate 499, aspartate 501, and aspartate 503. Residues cysteine 867, cysteine 943, cysteine 950, and cysteine 953 each contribute to the Zn(2+) site.

Belongs to the RNA polymerase beta' chain family. As to quaternary structure, the RNAP catalytic core consists of 2 alpha, 1 beta, 1 beta' and 1 omega subunit. When a sigma factor is associated with the core the holoenzyme is formed, which can initiate transcription. Mg(2+) serves as cofactor. It depends on Zn(2+) as a cofactor.

The catalysed reaction is RNA(n) + a ribonucleoside 5'-triphosphate = RNA(n+1) + diphosphate. In terms of biological role, DNA-dependent RNA polymerase catalyzes the transcription of DNA into RNA using the four ribonucleoside triphosphates as substrates. The chain is DNA-directed RNA polymerase subunit beta' from Chlorobium limicola (strain DSM 245 / NBRC 103803 / 6330).